The sequence spans 419 residues: Hyaluronan synthase (419 aa).

Transmembrane regions (helical) follow at residues 8–28 (LIVL…MYLF), 33–53 (VGIY…LSFL), 318–338 (IVAL…VAIG), 345–365 (AIQL…IVAL), and 376–396 (PASF…LQPL).

Belongs to the NodC/HAS family. The cofactor is Mg(2+).

The protein localises to the cell membrane. The catalysed reaction is [hyaluronan](n) + UDP-N-acetyl-alpha-D-glucosamine = N-acetyl-beta-D-glucosaminyl-(1-&gt;4)-[hyaluronan](n) + UDP + H(+). It catalyses the reaction N-acetyl-beta-D-glucosaminyl-(1-&gt;4)-[hyaluronan](n) + UDP-alpha-D-glucuronate = [hyaluronan](n+1) + UDP + H(+). It participates in glycan biosynthesis; hyaluronan biosynthesis. Glycosaminoglycan synthesis. The hyaluronic acid capsule is involved in the pathogenicity of group A Streptococci; it may be the major virulence determinant. The polypeptide is Hyaluronan synthase (hasA) (Streptococcus pyogenes serotype M18 (strain MGAS8232)).